Consider the following 464-residue polypeptide: Probable glycosyltransferase Saci_1499 (464 aa).

A run of 6 helical transmembrane segments spans residues 6–26, 300–320, 337–357, 373–393, 416–436, and 439–459; these read IFLN…QIIL, LIIY…STLL, ALLF…SLAL, LTAF…KGLL, IIAI…LYIY, and YYVT…TMLL.

The protein belongs to the glycosyltransferase 2 family.

Its subcellular location is the cell membrane. In terms of biological role, probably part of a 4-gene DNA damage response locus in which the upstream ups system, in combination with this downstream locus, functions in homologous recombination to rescue Sulfolobales from DNA-damaging threats. The sequence is that of Probable glycosyltransferase Saci_1499 from Sulfolobus acidocaldarius (strain ATCC 33909 / DSM 639 / JCM 8929 / NBRC 15157 / NCIMB 11770).